A 234-amino-acid chain; its full sequence is DNA repair protein RecO (234 aa).

This sequence belongs to the RecO family.

Involved in DNA repair and RecF pathway recombination. This Coxiella burnetii (strain RSA 331 / Henzerling II) protein is DNA repair protein RecO.